Here is a 21-residue protein sequence, read N- to C-terminus: Cupiennin-6b (21 aa).

S21 bears the Serine amide mark.

In terms of tissue distribution, expressed by the venom gland.

Its subcellular location is the secreted. In Cupiennius salei (American wandering spider), this protein is Cupiennin-6b.